The following is a 123-amino-acid chain: MAPPKPSAKGAKKAAKTVSKPKDGKKRKHARKESYSVYIYRVLKQVHPDTGVSSKAMSIMNSFVNDVFERIASEASRLAHYNKRSTISSREIQTAVRLILPGELAKHAVSEGTKAVTKYTSSK.

The segment at 1–31 (MAPPKPSAKGAKKAAKTVSKPKDGKKRKHAR) is disordered. Residue S110 is glycosylated (O-linked (GlcNAc) serine). K118 is covalently cross-linked (Glycyl lysine isopeptide (Lys-Gly) (interchain with G-Cter in ubiquitin)).

This sequence belongs to the histone H2B family. The nucleosome is a histone octamer containing two molecules each of H2A, H2B, H3 and H4 assembled in one H3-H4 heterotetramer and two H2A-H2B heterodimers. The octamer wraps approximately 147 bp of DNA. Monoubiquitination of Lys-118 gives a specific tag for epigenetic transcriptional activation and is also prerequisite for histone H3 'Lys-4' and 'Lys-79' methylation. In terms of processing, glcNAcylation at Ser-110 promotes monoubiquitination of Lys-118. It fluctuates in response to extracellular glucose, and associates with transcribed genes.

The protein resides in the nucleus. It is found in the chromosome. Functionally, core component of nucleosome. Nucleosomes wrap and compact DNA into chromatin, limiting DNA accessibility to the cellular machineries which require DNA as a template. Histones thereby play a central role in transcription regulation, DNA repair, DNA replication and chromosomal stability. DNA accessibility is regulated via a complex set of post-translational modifications of histones, also called histone code, and nucleosome remodeling. The chain is Probable histone H2B 3 (his-41) from Caenorhabditis elegans.